The following is a 222-amino-acid chain: Polyadenylate-binding protein 2 (222 aa).

The disordered stretch occupies residues 1-43 (MTDNNNGEIVEDKDNEKLKGEDNINNHISNHNNTEETSFEDPE). A compositionally biased stretch (basic and acidic residues) spans 10-24 (VEDKDNEKLKGEDNI). One can recognise an RRM domain in the interval 101–178 (RSVYVGNVDY…RQLKITPKRT (78 aa)).

The protein resides in the nucleus. Functionally, involved in the 3'-end formation of mRNA precursors (pre-mRNA) by the addition of a poly(A) tail of 200-250 nt to the upstream cleavage product. In Dictyostelium discoideum (Social amoeba), this protein is Polyadenylate-binding protein 2 (pabpn1).